Reading from the N-terminus, the 512-residue chain is cAMP-dependent protein kinase catalytic subunit (512 aa).

The segment covering 1-15 (MDTTAVASKGSTNVG) has biased composition (polar residues). 2 disordered regions span residues 1–79 (MDTT…SSLW) and 118–166 (IDNL…GLRD). A compositionally biased stretch (low complexity) spans 16–27 (SSTDTLSTSASL). Polar residues-rich tracts occupy residues 32–52 (NAGS…SFNG) and 62–79 (SDAS…SSLW). The segment covering 143–166 (SRDGRGELGSEHGERRSAMDGLRD) has biased composition (basic and acidic residues). Positions 201–456 (FNFLQTLGTG…SMDIIMHPWF (256 aa)) constitute a Protein kinase domain. ATP is bound by residues 207-215 (LGTGSFGRV) and lysine 230. Aspartate 324 (proton acceptor) is an active-site residue. Position 356 is a phosphothreonine (threonine 356). The region spanning 457–512 (RDISWDKILTRKIEVPYVPPIQAGMGDSSQFDAYADVATDYGTSEDPEFTSIFKDF) is the AGC-kinase C-terminal domain.

It belongs to the protein kinase superfamily. AGC Ser/Thr protein kinase family. cAMP subfamily.

It catalyses the reaction L-seryl-[protein] + ATP = O-phospho-L-seryl-[protein] + ADP + H(+). The enzyme catalyses L-threonyl-[protein] + ATP = O-phospho-L-threonyl-[protein] + ADP + H(+). Activated by cAMP. The polypeptide is cAMP-dependent protein kinase catalytic subunit (pka1) (Schizosaccharomyces pombe (strain 972 / ATCC 24843) (Fission yeast)).